An 885-amino-acid chain; its full sequence is DNA mismatch repair protein MutS (885 aa).

Residue 626–633 (GPNMGGKS) coordinates ATP.

Belongs to the DNA mismatch repair MutS family.

In terms of biological role, this protein is involved in the repair of mismatches in DNA. It is possible that it carries out the mismatch recognition step. This protein has a weak ATPase activity. This Burkholderia orbicola (strain MC0-3) protein is DNA mismatch repair protein MutS.